The chain runs to 538 residues: Chaperonin GroEL (538 aa).

Residues 29–32 (TIGP), 86–90 (DGTTT), Gly413, 476–478 (NAA), and Asp492 contribute to the ATP site.

The protein belongs to the chaperonin (HSP60) family. As to quaternary structure, forms a cylinder of 14 subunits composed of two heptameric rings stacked back-to-back. Interacts with the co-chaperonin GroES.

The protein localises to the cytoplasm. It catalyses the reaction ATP + H2O + a folded polypeptide = ADP + phosphate + an unfolded polypeptide.. Its function is as follows. Together with its co-chaperonin GroES, plays an essential role in assisting protein folding. The GroEL-GroES system forms a nano-cage that allows encapsulation of the non-native substrate proteins and provides a physical environment optimized to promote and accelerate protein folding. In Staphylococcus aureus (strain Mu3 / ATCC 700698), this protein is Chaperonin GroEL.